Consider the following 467-residue polypeptide: Chlorophenol O-methyltransferase (467 aa).

Residues 1–41 (MAELRAPSSLSTERNGSASNTDVDKQKLNHLYQNGNKKTGS) are disordered. Polar residues-rich tracts occupy residues 8-21 (SSLS…ASNT) and 31-41 (LYQNGNKKTGS). Position 320 (Asp320) interacts with S-adenosyl-L-methionine. His368 functions as the Proton acceptor in the catalytic mechanism.

The protein belongs to the class I-like SAM-binding methyltransferase superfamily. Cation-independent O-methyltransferase family.

The catalysed reaction is 2,4,6-trichlorophenol + S-adenosyl-L-methionine = 2,4,6-trichloroanisole + S-adenosyl-L-homocysteine. S-adenosyl-L-homocysteine acts as a competitive inhibitor. Also strongly inhibited by low concentrations of several metal ions, such as Cu(2+), Hg(2+), Zn(2+), and Ag(+), and to a lesser extent by p-chloromercuribenzoic acid, but it is not significantly affected by several thiols or other thiol reagents. Its function is as follows. Chlorophenol O-methyltransferase that methylates chlorophenols into chloroanisoles which are thought to be responsible for cork taint of wines. The only single chlorophenol (CP) methylated is 2-CP; neither 3-CP nor 4-CP are effective substrates. Within the dichlorophenols (DCPs), 2,4-DCP supports the highest rate of O-methylation, and the activity decreases in the following order: 2,3-DCP, 2,5-DCP, 2,6-DCP, and 3,4-DCP. Within the trichlorophenol (TCP) group, the maximal activity is observed with 2,3,4-TCP, whereas there is increasingly reduced activity with 2,4,5-TCP, 2,4,6-TCP, and 2,3,6-TCP. The only tetrachlorophenol (TeCP) that is methylated is 2,3,4,5-TeCP, since no activity can be detected with 2,3,4,6-TeCP and 2,3,5,6-TeCP. Is also able to methylate other halogenated phenols containing fluoro or bromo substituents, whereas other hydroxylated compounds, such as hydroxylated benzoic acids, hydroxybenzaldehydes, phenol, 2-metoxyphenol, and dihydroxybenzene, were not methylated. This Trichoderma longibrachiatum protein is Chlorophenol O-methyltransferase.